A 552-amino-acid chain; its full sequence is Putative transport protein YPN_3727 (552 aa).

A run of 6 helical transmembrane segments spans residues 1–21 (MSAI…GLWI), 26–46 (IYGV…VGHF), 65–85 (FGLI…FFSS), 96–116 (FAIL…KLFA), 119–139 (LPII…LGAA), and 158–178 (MGYA…MWLI). RCK C-terminal domains follow at residues 192–276 (AFDS…VVGE) and 279–361 (DVTL…IVGN). Helical transmembrane passes span 371-391 (MLPV…PLFV), 393-413 (GFPA…ALIL), 439-459 (IVLF…NTLV), 464-484 (LAWI…VGIL), 493-513 (YLTL…LAFA), and 530-550 (VYPL…VLFW).

This sequence belongs to the AAE transporter (TC 2.A.81) family. YidE subfamily.

It is found in the cell membrane. This is Putative transport protein YPN_3727 from Yersinia pestis bv. Antiqua (strain Nepal516).